Consider the following 452-residue polypeptide: Eukaryotic translation initiation factor 4B3 (452 aa).

Ala-2 carries the post-translational modification N-acetylalanine. Positions 20-282 (EEHEAELKQQ…PSGGSRPRLV (263 aa)) are disordered. The span at 28-37 (QQPSPTNQKS) shows a compositional bias: polar residues. Residues 98–110 (PRERSAEELDRSK) show a composition bias toward basic and acidic residues. Positions 111–122 (LGGGFRSYGGGR) are enriched in gly residues. The span at 126-136 (ESSSSRWGSSR) shows a compositional bias: low complexity. Basic and acidic residues predominate over residues 137 to 156 (VSEDGERRGGGFNRDREPSR). 2 consecutive short sequence motifs (nuclear localization signal) follow at residues 172 to 179 (AKKPISGN) and 215 to 222 (PRRFVSSN). Positions 227-243 (DRFEKRGSFESLSRNRD) are enriched in basic and acidic residues. 3 positions are modified to phosphoserine: Ser-234, Ser-270, and Ser-300. Residues 265–280 (GAANGSPPPSGGSRPR) show a composition bias toward low complexity. Positions 349 to 452 (AAMEKPNEKS…AKKEETEDKI (104 aa)) are disordered. A compositionally biased stretch (basic and acidic residues) spans 369-386 (GRKDEERIERSWRKSTEH). Residues 387–397 (SEEDAQEEEPA) show a composition bias toward acidic residues. Composition is skewed to basic and acidic residues over residues 400–419 (GAKK…KKEE) and 441–452 (EEAKKEETEDKI).

Belongs to the eIF-4 subunit B family. In terms of assembly, homodimer. Nonspherical monomer. mRNA-discriminating component of initiation complexes. Interacts with MAD2. Phosphorylated.

The protein localises to the nucleus. In terms of biological role, promotes the eIF4F and eIF4A RNA-dependent ATP-hydrolysis activity with different efficiency depending on mRNAs, thus providing mRNA discrimination during initiation of translation. This chain is Eukaryotic translation initiation factor 4B3, found in Arabidopsis thaliana (Mouse-ear cress).